We begin with the raw amino-acid sequence, 774 residues long: Subtilisin-like protease SBT3.5 (774 aa).

An N-terminal signal peptide occupies residues 1–23 (MRNCRVLLVLVLSLVIVLNVVRA). A propeptide spans 24–108 (SDESKVHIVY…VMADSFYELA (85 aa)) (removed in mature form). The Inhibitor I9 domain maps to 29-108 (VHIVYLGEKQ…VMADSFYELA (80 aa)). One can recognise a Peptidase S8 domain in the interval 112–621 (TWDYLGLSVA…GGIVNPEKAA (510 aa)). Asn-128 carries an N-linked (GlcNAc...) asparagine glycan. The Charge relay system role is filled by Asp-142. The N-linked (GlcNAc...) asparagine glycan is linked to Asn-201. His-217 (charge relay system) is an active-site residue. Asn-232, Asn-394, Asn-409, and Asn-539 each carry an N-linked (GlcNAc...) asparagine glycan. One can recognise a PA domain in the interval 383–478 (SLVYPENAGF…ELGTDVLLYI (96 aa)). Ser-552 acts as the Charge relay system in catalysis. N-linked (GlcNAc...) asparagine glycosylation is found at Asn-644, Asn-654, Asn-725, and Asn-755.

Belongs to the peptidase S8 family. As to expression, expressed in roots, leaves, stems, flower buds, developing siliques and mature seeds.

Its subcellular location is the secreted. The protein localises to the cell wall. Functionally, serine protease that cleaves the pectin methylesterase 17 (PME17) protein to release the PME17 mature form in the apoplasm. In Arabidopsis thaliana (Mouse-ear cress), this protein is Subtilisin-like protease SBT3.5.